Consider the following 218-residue polypeptide: MDKSESTSAGRNHRRRPRRGSRSAPSSADANFRVLSQQLSRLNKTLAAGRPTINHPTFVGSERCRPGYTFTSITLKPPKIDRESYYGKRLLLPDSVTEYDKKLVSRIQIRVNPLPKFDSTVWVTVRKVPASSDLSVAAISAMFADGASPVLVYQYAASGVQANNKLLFDLSAMRADIGDMRKYAVLVYSKDDALETDELVLHVDIEHQRIPTSGVLPV.

Residue methionine 1 is modified to N-acetylmethionine; by host. The interval 1–29 is disordered; the sequence is MDKSESTSAGRNHRRRPRRGSRSAPSSAD. Positions 11–21 are enriched in basic residues; that stretch reads RNHRRRPRRGS.

Belongs to the cucumovirus capsid protein family.

Its subcellular location is the virion. Functionally, capsid protein. Probably binds RNA and plays a role in packaging. This chain is Capsid protein, found in Cucumber mosaic virus (strain C) (CMV).